Consider the following 475-residue polypeptide: MTQIIHIVGGGLAGSEAAWQVAEAGHRAVIHEMRPVRGTEAHRTDGLAELVCSNSFRSDDPEGNAVGLLHQEMRSLGSLIMRAADTNQVPAGGALAVDREGFSAAVTRALEQHPNVTLVRGEVEGLPPEAWGPCIVATGPLTAPALAEGIRGLTGAESLAFFDAIAPIVHRDSIDMDVAWFQSRYDKPGPGGTGADYLNCPMSREQYDTFVAALVAGEKIGFKQWEGTPYFDGCLPVEVMAERGPETLRHGPMKPVGLTNPRDPLVKPCAIVQLRQDNALGTLYNMVGFQTKLTYSEQVRIFRMIPGLERAEFARLGGLHRNTYLDSPRLLDATLRLRARPSLRFAGQITGCEGYVESAAVGLMAGRFAVAEAAGRPLAPLPQSTALGALIAHITGGHLMADGEANAPRSFQPMNVNFGLFPPLERAPRNETGRRLRGPEKAALKKRALTDRARADLALWLEGARDGAARPAAAE.

9-14 serves as a coordination point for FAD; sequence GGGLAG. Positions 427–447 are disordered; that stretch reads APRNETGRRLRGPEKAALKKR.

Belongs to the MnmG family. TrmFO subfamily. FAD is required as a cofactor.

It is found in the cytoplasm. The enzyme catalyses uridine(54) in tRNA + (6R)-5,10-methylene-5,6,7,8-tetrahydrofolate + NADH + H(+) = 5-methyluridine(54) in tRNA + (6S)-5,6,7,8-tetrahydrofolate + NAD(+). The catalysed reaction is uridine(54) in tRNA + (6R)-5,10-methylene-5,6,7,8-tetrahydrofolate + NADPH + H(+) = 5-methyluridine(54) in tRNA + (6S)-5,6,7,8-tetrahydrofolate + NADP(+). In terms of biological role, catalyzes the folate-dependent formation of 5-methyl-uridine at position 54 (M-5-U54) in all tRNAs. In Methylobacterium radiotolerans (strain ATCC 27329 / DSM 1819 / JCM 2831 / NBRC 15690 / NCIMB 10815 / 0-1), this protein is Methylenetetrahydrofolate--tRNA-(uracil-5-)-methyltransferase TrmFO.